The primary structure comprises 526 residues: GMP synthase [glutamine-hydrolyzing] (526 aa).

One can recognise a Glutamine amidotransferase type-1 domain in the interval 3-199 (RVAIIDFGSQ…FVRIAGCDNN (197 aa)). Residue cysteine 83 is the Nucleophile of the active site. Active-site residues include histidine 174 and glutamate 176. Positions 200–392 (WTVESFLDEQ…LGISDEILMR (193 aa)) constitute a GMPS ATP-PPase domain. 227-233 (SGGVDSS) provides a ligand contact to ATP.

As to quaternary structure, homodimer.

It catalyses the reaction XMP + L-glutamine + ATP + H2O = GMP + L-glutamate + AMP + diphosphate + 2 H(+). It functions in the pathway purine metabolism; GMP biosynthesis; GMP from XMP (L-Gln route): step 1/1. Its function is as follows. Catalyzes the synthesis of GMP from XMP. This chain is GMP synthase [glutamine-hydrolyzing], found in Ehrlichia chaffeensis (strain ATCC CRL-10679 / Arkansas).